The following is a 1186-amino-acid chain: MAKEDTGVTAPKKPETAQVANINGIDKLEPPKTKEETESSKSVSSEKAAHASDESFKRSIHEASYVGWKQIGGWEDKDELTLDDELMDMTRETFLDNIIPDSLYGDWYHSVAIFFIGGVASFALGHYKFSMGSAFFVIVITSLLYRTSAKKYRGSIRELVQKEFTVQKVENDYESLEWLNAFLDKYWPILEPSVSQLIVQQANEQMATNEAIPKFITQLWIDELTLGVKPPRVDLVKTFQNTASDVVVMDWGISFTPHDLCDMSAKQVRNYVNELAVVKAKIFGITIPVSVSDIAFKAHARVKFKLMTPFPHVETVNIQLLKVPDFDFVATLFGRSIFNWEILAIPGLMTLIQKMAKKYMGPILLPPFSLQLNIPQLLSGSNLSIGILEITVKNAKGLKRTSSILNESIDPYLSFEFNDISIAKTRTVRDTLNPVWDETLYVLLNSFTDPLTISVYDKRAKLKDKVLGRIQYNLNTLHDKTTQRNLKAQFLRNSKPVGELTFDLRFFPTLEEKKLPDGSVEELPDLNTGIAKVVVEEGSRFAEEEQKVTAYVEVYLNAKLVLTTGKATDTGTLKWNSDYEAVIADRRKTRYKFVVKDGKGEEIGSTIQTLNDLIDRSQVNKNLIPLKNQKGDIKITTYWRPVRLEIGSNSVAYTPPIGAIRVFIEKANDLRNLEKFGTIDPYCKVLVNGLSKGRTDFKSQTLNPVWNQVIYVAVTSPNQRITLQCMDVETVNKDRSLGEFNVNVQDLFKKDENDKYEETIDEKAKVGRLVMPKKKPKGTITYYTSFYPALPVLTLEEIQDLDKVNKKKKALELRKSAIDEKKISKEDKAKFDQEWNEVKELEDMYSNRQKLDLPELLQYNQGVLAVTVLNGELPDSGLYVQAFFDDNGHPRFVSPRIPSRIVKNGWSGDVIIKELDKSITTFRVAKNKNYNRVEKCVCEVELPTQELVKNCYYKPSILHLSGEGSAKLMLQISWFPIDTKQLPANDLITNSGDLTIMSRSAENLIASDLNGYSDPYLKYYINNEEDCAYKTKVVKKTLNPKWNDEGTIQINNRLNDVLRIKVMDWDSTSADDTIGTAEIPLNKVKVEGTTELDVPVEGLENAGQDGGMLHLAFSFKPRYTISVSKREKKVGDIASKGLGTGLKAGTTVIGGGVGAIGKIKKGVFGGLGSLTNHKKNHEMGEEETKF.

The tract at residues 1-50 (MAKEDTGVTAPKKPETAQVANINGIDKLEPPKTKEETESSKSVSSEKAAH) is disordered. At 1 to 106 (MAKEDTGVTA…NIIPDSLYGD (106 aa)) the chain is on the cytoplasmic side. Residues 26 to 39 (DKLEPPKTKEETES) show a composition bias toward basic and acidic residues. The chain crosses the membrane as a helical span at residues 107 to 127 (WYHSVAIFFIGGVASFALGHY). Position 128 (Lys128) is a topological domain, extracellular. A helical membrane pass occupies residues 129 to 149 (FSMGSAFFVIVITSLLYRTSA). At 150–1186 (KKYRGSIREL…HEMGEEETKF (1037 aa)) the chain is on the cytoplasmic side. The SMP-LTD domain occupies 172-375 (DYESLEWLNA…PPFSLQLNIP (204 aa)). C2 domains are found at residues 366–487 (PPFS…RNLK), 512–636 (EKKL…IKIT), and 640–757 (RPVR…DKYE). The stretch at 795–822 (LEEIQDLDKVNKKKKALELRKSAIDEKK) forms a coiled coil. Positions 976 to 1094 (PIDTKQLPAN…KVEGTTELDV (119 aa)) constitute a C2 4 domain. Residue Ser1000 is modified to Phosphoserine. Ca(2+) is bound by residues Asp1008, Asp1014, Asp1064, Asp1066, Ser1069, and Asp1072.

Belongs to the tricalbin family. As to quaternary structure, interacts with TCB2 via its C-terminal domain. Requires Ca(2+) as cofactor.

It is found in the cell membrane. It localises to the endoplasmic reticulum membrane. May play a role in membrane trafficking. The polypeptide is Tricalbin-1 (TCB1) (Saccharomyces cerevisiae (strain ATCC 204508 / S288c) (Baker's yeast)).